A 373-amino-acid polypeptide reads, in one-letter code: Peroxisomal biogenesis factor 3 (373 aa).

Over 1-15 the chain is Cytoplasmic; it reads MLRSMWNFLKRHKKK. A targeting to peroxisomes region spans residues 1–45; the sequence is MLRSMWNFLKRHKKKCIFLGTVLGGVYILGKYGQKKIREIQEREA. A helical transmembrane segment spans residues 16 to 36; it reads CIFLGTVLGGVYILGKYGQKK. Over 37–116 the chain is Peroxisomal; that stretch reads IREIQEREAA…LKIISFTRSI (80 aa). Residues 117–140 form a helical membrane-spanning segment; sequence VAVYSTCMLVVLLRVQLNIIGGYI. The tract at residues 120-136 is interaction with PEX19; that stretch reads YSTCMLVVLLRVQLNII. Residues 141-373 are Cytoplasmic-facing; the sequence is YLDNATVGKN…AFSTPQQLEK (233 aa).

It belongs to the peroxin-3 family. Interacts with PEX19.

The protein resides in the peroxisome membrane. In terms of biological role, involved in peroxisome biosynthesis and integrity. Assembles membrane vesicles before the matrix proteins are translocated. As a docking factor for PEX19, is necessary for the import of peroxisomal membrane proteins in the peroxisomes. The polypeptide is Peroxisomal biogenesis factor 3 (PEX3) (Cricetulus longicaudatus (Long-tailed dwarf hamster)).